We begin with the raw amino-acid sequence, 467 residues long: Inactive pancreatic lipase-related protein 1 (467 aa).

A signal peptide spans 1–17 (MLIFWTITLFLLGAAKG). 2 disulfide bridges follow: cysteine 21-cysteine 27 and cysteine 109-cysteine 120. Serine 171 acts as the Nucleophile in catalysis. Aspartate 194 functions as the Charge relay system in the catalytic mechanism. Ca(2+) is bound by residues glutamate 205, arginine 208, aspartate 210, and aspartate 213. A disulfide bridge connects residues cysteine 255 and cysteine 279. The active-site Charge relay system is histidine 281. 3 disulfide bridges follow: cysteine 303-cysteine 314, cysteine 317-cysteine 322, and cysteine 451-cysteine 467. The region spanning 356-467 (WRYGVSITLS…EDTLLTLTPC (112 aa)) is the PLAT domain.

This sequence belongs to the AB hydrolase superfamily. Lipase family. Pancreas.

It is found in the secreted. In terms of biological role, may function as inhibitor of dietary triglyceride digestion. Lacks detectable lipase activity towards triglycerides, diglycerides, phosphatidylcholine, galactolipids or cholesterol esters (in vitro). This chain is Inactive pancreatic lipase-related protein 1 (PNLIPRP1), found in Homo sapiens (Human).